We begin with the raw amino-acid sequence, 297 residues long: Aspartate carbamoyltransferase catalytic subunit (297 aa).

2 residues coordinate carbamoyl phosphate: Arg49 and Thr50. Lys77 lines the L-aspartate pocket. 3 residues coordinate carbamoyl phosphate: Arg99, His129, and Gln132. L-aspartate-binding residues include Arg162 and Arg215. Carbamoyl phosphate contacts are provided by Gly256 and Pro257.

This sequence belongs to the aspartate/ornithine carbamoyltransferase superfamily. ATCase family. Heterododecamer (2C3:3R2) of six catalytic PyrB chains organized as two trimers (C3), and six regulatory PyrI chains organized as three dimers (R2).

It catalyses the reaction carbamoyl phosphate + L-aspartate = N-carbamoyl-L-aspartate + phosphate + H(+). It functions in the pathway pyrimidine metabolism; UMP biosynthesis via de novo pathway; (S)-dihydroorotate from bicarbonate: step 2/3. In terms of biological role, catalyzes the condensation of carbamoyl phosphate and aspartate to form carbamoyl aspartate and inorganic phosphate, the committed step in the de novo pyrimidine nucleotide biosynthesis pathway. This chain is Aspartate carbamoyltransferase catalytic subunit, found in Legionella pneumophila (strain Paris).